The primary structure comprises 447 residues: Adenylosuccinate synthetase (447 aa).

GTP-binding positions include 35-41 (GDEGKGK) and 63-65 (GHT). The Proton acceptor role is filled by Asp-36. The Mg(2+) site is built by Asp-36 and Gly-63. Residues 36–39 (DEGK), 61–64 (NAGH), Thr-153, Arg-167, Asn-245, Thr-260, and Arg-324 each bind IMP. His-64 acts as the Proton donor in catalysis. 320 to 326 (VTTKRKR) provides a ligand contact to substrate. Residues Arg-326, 352 to 354 (KLD), and 435 to 437 (GVG) contribute to the GTP site.

This sequence belongs to the adenylosuccinate synthetase family. In terms of assembly, homodimer. It depends on Mg(2+) as a cofactor.

It is found in the cytoplasm. The enzyme catalyses IMP + L-aspartate + GTP = N(6)-(1,2-dicarboxyethyl)-AMP + GDP + phosphate + 2 H(+). It functions in the pathway purine metabolism; AMP biosynthesis via de novo pathway; AMP from IMP: step 1/2. Functionally, plays an important role in the de novo pathway and in the salvage pathway of purine nucleotide biosynthesis. Catalyzes the first committed step in the biosynthesis of AMP from IMP. The sequence is that of Adenylosuccinate synthetase from Drosophila sechellia (Fruit fly).